The primary structure comprises 197 residues: Xanthine phosphoribosyltransferase (197 aa).

Xanthine-binding residues include leucine 20 and threonine 27. Position 128–132 (128–132 (ANGQA)) interacts with 5-phospho-alpha-D-ribose 1-diphosphate. Residue lysine 156 participates in xanthine binding.

This sequence belongs to the purine/pyrimidine phosphoribosyltransferase family. Xpt subfamily. In terms of assembly, homodimer.

The protein resides in the cytoplasm. It carries out the reaction XMP + diphosphate = xanthine + 5-phospho-alpha-D-ribose 1-diphosphate. Its pathway is purine metabolism; XMP biosynthesis via salvage pathway; XMP from xanthine: step 1/1. In terms of biological role, converts the preformed base xanthine, a product of nucleic acid breakdown, to xanthosine 5'-monophosphate (XMP), so it can be reused for RNA or DNA synthesis. The chain is Xanthine phosphoribosyltransferase from Lactococcus lactis subsp. cremoris (strain SK11).